The following is a 504-amino-acid chain: L-carnitine/gamma-butyrobetaine antiporter (504 aa).

Helical transmembrane passes span 10–30 (IEPK…WLTV), 51–71 (WGWA…WLVF), 92–112 (IFMM…SIEI), 143–163 (GPLP…FFFV), 195–215 (FYLV…TPLV), 231–251 (LDAI…ACGL), 263–283 (SYLS…SFIM), 316–336 (WTVF…IFLA), 347–367 (LCFG…TVLG), 398–418 (WAAL…CFIA), 446–466 (LLVR…LLAL), and 475–495 (AIIA…LSFI).

It belongs to the BCCT transporter (TC 2.A.15) family. CaiT subfamily. As to quaternary structure, homotrimer.

It is found in the cell inner membrane. It carries out the reaction 4-(trimethylamino)butanoate(in) + (R)-carnitine(out) = 4-(trimethylamino)butanoate(out) + (R)-carnitine(in). It participates in amine and polyamine metabolism; carnitine metabolism. Functionally, catalyzes the exchange of L-carnitine for gamma-butyrobetaine. The protein is L-carnitine/gamma-butyrobetaine antiporter of Escherichia coli (strain K12 / MC4100 / BW2952).